The chain runs to 161 residues: Allophycocyanin alpha chain (161 aa).

Asn71 carries the post-translational modification N4-methylasparagine. (2R,3E)-phycocyanobilin is bound at residue Cys81.

Belongs to the phycobiliprotein family. As to quaternary structure, heterodimer of an alpha and a beta chain. Post-translationally, contains one covalently linked phycocyanobilin chromophore.

It is found in the plastid. The protein localises to the chloroplast thylakoid membrane. In terms of biological role, light-harvesting photosynthetic bile pigment-protein from the phycobiliprotein complex. Allophycocyanin has a maximum absorption at approximately 650 nanometers. The polypeptide is Allophycocyanin alpha chain (apcA) (Pyropia haitanensis (Red seaweed)).